The sequence spans 548 residues: Fluconazole resistance protein 1 (548 aa).

The segment at 30 to 94 (SAREDETRKP…WNGPSDPENP (65 aa)) is disordered. Positions 31 to 51 (AREDETRKPENTDKKECKPDY) are enriched in basic and acidic residues. Over residues 60–73 (SCSESSTDSDSSGS) the composition is skewed to low complexity. 12 consecutive transmembrane segments (helical) span residues 104 to 124 (LVVF…SIYT), 139 to 159 (VVAT…PIIF), 179 to 199 (FFFM…GLIV), 203 to 223 (ISGI…ADII), 230 to 250 (LVLG…PLLG), 261 to 281 (FIFW…AFFF), 347 to 367 (IAVA…VFVG), 376 to 396 (VGLA…LFGI), 416 to 436 (FLIV…LFGW), 440 to 460 (VHWI…FNIF), 476 to 496 (ASVF…FPLF), and 511 to 531 (VAWG…IPFI).

It belongs to the major facilitator superfamily.

The protein localises to the membrane. Functionally, probable efflux transporter. Confers resistance to the azole derivative fluconazole (FCZ). This chain is Fluconazole resistance protein 1 (FLR1), found in Saccharomyces cerevisiae (strain ATCC 204508 / S288c) (Baker's yeast).